A 118-amino-acid chain; its full sequence is Protein yippee-like 1 (118 aa).

A Yippee domain is found at R19–N116. Positions 23, 26, 79, and 82 each coordinate Zn(2+). The short motif at K99–K104 is the Nuclear localization signal element.

It belongs to the yippee family.

The protein resides in the nucleus. Its function is as follows. May play a role in epithelioid conversion of fibroblasts. The polypeptide is Protein yippee-like 1 (Ypel1) (Mus musculus (Mouse)).